A 365-amino-acid polypeptide reads, in one-letter code: Sulfate/thiosulfate import ATP-binding protein CysA (365 aa).

An ABC transporter domain is found at 3–237; that stretch reads IEIARIKKSF…PATRFVLEFM (235 aa). 35-42 contributes to the ATP binding site; the sequence is GPSGSGKT.

It belongs to the ABC transporter superfamily. Sulfate/tungstate importer (TC 3.A.1.6) family. In terms of assembly, the complex is composed of two ATP-binding proteins (CysA), two transmembrane proteins (CysT and CysW) and a solute-binding protein (CysP).

The protein resides in the cell inner membrane. It carries out the reaction sulfate(out) + ATP + H2O = sulfate(in) + ADP + phosphate + H(+). It catalyses the reaction thiosulfate(out) + ATP + H2O = thiosulfate(in) + ADP + phosphate + H(+). Its function is as follows. Part of the ABC transporter complex CysAWTP involved in sulfate/thiosulfate import. Responsible for energy coupling to the transport system. In Salmonella typhimurium (strain LT2 / SGSC1412 / ATCC 700720), this protein is Sulfate/thiosulfate import ATP-binding protein CysA.